A 369-amino-acid polypeptide reads, in one-letter code: MKSGRFIGVMSGTSLDGVDVVLATIDEHRVAQLASLSWPIPVSLKQAVLDICQGQQLTLSQFGQLDTQLGRLFADAVNALLKEQNLQARDIVAIGCHGQTVWHEPTGVAPHTLQIGDNNQIVARTGITVVGDFRRRDIALGGQGAPLVPAFHHALLAHPTEQRMVLNIGGIANLSLLIPGQPVGGYDTGPGNMLMDAWIWRQAGKPYDKDAEWARAGKVILPLLQNMLSDPYFSQPAPKSTGREYFNYGWLERHLRHFPGVDPRDVQATLAELTAVTISEQVLLSGGCERLMVCGGGSRNPLLMARLAALLPGTEVTTTDAVGISGDDMEALAFAWLAWRTLAGLPGNLPSVTGASQETVLGAIFPANP.

12-19 (GTSLDGVD) contributes to the ATP binding site.

The protein belongs to the anhydro-N-acetylmuramic acid kinase family.

The catalysed reaction is 1,6-anhydro-N-acetyl-beta-muramate + ATP + H2O = N-acetyl-D-muramate 6-phosphate + ADP + H(+). Its pathway is amino-sugar metabolism; 1,6-anhydro-N-acetylmuramate degradation. The protein operates within cell wall biogenesis; peptidoglycan recycling. In terms of biological role, catalyzes the specific phosphorylation of 1,6-anhydro-N-acetylmuramic acid (anhMurNAc) with the simultaneous cleavage of the 1,6-anhydro ring, generating MurNAc-6-P. Is required for the utilization of anhMurNAc either imported from the medium or derived from its own cell wall murein, and thus plays a role in cell wall recycling. This is Anhydro-N-acetylmuramic acid kinase from Escherichia coli O8 (strain IAI1).